Here is a 297-residue protein sequence, read N- to C-terminus: Phosphatidylinositol N-acetylglucosaminyltransferase subunit C (297 aa).

A run of 4 helical transmembrane segments spans residues 67-87 (VFVVIWWYMDEGLLAPQWLFG), 88-108 (TGLASSLVGYVLFDLIDGGDG), 153-173 (AVFMLLGHLIFFDYGANAAIV), and 239-259 (AFGGLLSISAVGAILFALLLF).

It belongs to the PIGC family. As to quaternary structure, component of the glycosylphosphatidylinositol-N-acetylglucosaminyltransferase (GPI-GnT) complex composed at least by PIGA, PIGC, PIGH, PIGP, PIGQ, PIGY and DPM2. Interacts with PIGQ. Interacts with the heterodimer PIGA:PIGH.

The protein localises to the endoplasmic reticulum membrane. It participates in glycolipid biosynthesis; glycosylphosphatidylinositol-anchor biosynthesis. Part of the glycosylphosphatidylinositol-N-acetylglucosaminyltransferase (GPI-GnT) complex that catalyzes the transfer of N-acetylglucosamine from UDP-N-acetylglucosamine to phosphatidylinositol and participates in the first step of GPI biosynthesis. In Mus musculus (Mouse), this protein is Phosphatidylinositol N-acetylglucosaminyltransferase subunit C.